A 235-amino-acid chain; its full sequence is Proteasome subunit beta type-1 (235 aa).

A propeptide spanning residues 1-20 (MSRLGFEQFPDYQVPGMKHP) is cleaved from the precursor.

Belongs to the peptidase T1B family. The 26S proteasome consists of a 20S proteasome core and two 19S regulatory subunits. The 20S proteasome core is composed of 28 subunits that are arranged in four stacked rings, resulting in a barrel-shaped structure. The two end rings are each formed by seven alpha subunits, and the two central rings are each formed by seven beta subunits. The catalytic chamber with the active sites is on the inside of the barrel.

The protein resides in the cytoplasm. Its subcellular location is the nucleus. In terms of biological role, non-catalytic component of the proteasome, a multicatalytic proteinase complex which is characterized by its ability to cleave peptides with Arg, Phe, Tyr, Leu, and Glu adjacent to the leaving group at neutral or slightly basic pH. The proteasome has an ATP-dependent proteolytic activity. The protein is Proteasome subunit beta type-1 (Prosbeta6) of Drosophila melanogaster (Fruit fly).